The primary structure comprises 872 residues: Alanine--tRNA ligase (872 aa).

Zn(2+) is bound by residues His571, His575, Cys674, and His678.

It belongs to the class-II aminoacyl-tRNA synthetase family. Zn(2+) serves as cofactor.

It is found in the cytoplasm. The enzyme catalyses tRNA(Ala) + L-alanine + ATP = L-alanyl-tRNA(Ala) + AMP + diphosphate. Catalyzes the attachment of alanine to tRNA(Ala) in a two-step reaction: alanine is first activated by ATP to form Ala-AMP and then transferred to the acceptor end of tRNA(Ala). Also edits incorrectly charged Ser-tRNA(Ala) and Gly-tRNA(Ala) via its editing domain. The polypeptide is Alanine--tRNA ligase (Symbiobacterium thermophilum (strain DSM 24528 / JCM 14929 / IAM 14863 / T)).